A 166-amino-acid polypeptide reads, in one-letter code: uncharacterized protein (166 aa).

The 63-residue stretch at 3 to 65 (LTEKETEILE…IDWRKVDGHE (63 aa)) folds into the HTH asnC-type domain. The H-T-H motif DNA-binding region spans 22–41 (LETIAKMAGIPVNEVKTIID).

This is an uncharacterized protein from Bacillus subtilis (strain 168).